The chain runs to 305 residues: UDP-3-O-acyl-N-acetylglucosamine deacetylase (305 aa).

Zn(2+) is bound by residues H79, H238, and D242. Residue H265 is the Proton donor of the active site.

The protein belongs to the LpxC family. Zn(2+) serves as cofactor.

It catalyses the reaction a UDP-3-O-[(3R)-3-hydroxyacyl]-N-acetyl-alpha-D-glucosamine + H2O = a UDP-3-O-[(3R)-3-hydroxyacyl]-alpha-D-glucosamine + acetate. Its pathway is glycolipid biosynthesis; lipid IV(A) biosynthesis; lipid IV(A) from (3R)-3-hydroxytetradecanoyl-[acyl-carrier-protein] and UDP-N-acetyl-alpha-D-glucosamine: step 2/6. Its function is as follows. Catalyzes the hydrolysis of UDP-3-O-myristoyl-N-acetylglucosamine to form UDP-3-O-myristoylglucosamine and acetate, the committed step in lipid A biosynthesis. In Cronobacter sakazakii (strain ATCC BAA-894) (Enterobacter sakazakii), this protein is UDP-3-O-acyl-N-acetylglucosamine deacetylase.